The primary structure comprises 716 residues: 1,4-alpha-glucan branching enzyme GlgB (716 aa).

Catalysis depends on aspartate 399, which acts as the Nucleophile. Catalysis depends on glutamate 452, which acts as the Proton donor.

Belongs to the glycosyl hydrolase 13 family. GlgB subfamily. In terms of assembly, monomer.

It carries out the reaction Transfers a segment of a (1-&gt;4)-alpha-D-glucan chain to a primary hydroxy group in a similar glucan chain.. The protein operates within glycan biosynthesis; glycogen biosynthesis. Catalyzes the formation of the alpha-1,6-glucosidic linkages in glycogen by scission of a 1,4-alpha-linked oligosaccharide from growing alpha-1,4-glucan chains and the subsequent attachment of the oligosaccharide to the alpha-1,6 position. This Rhodopseudomonas palustris (strain BisB5) protein is 1,4-alpha-glucan branching enzyme GlgB.